Here is a 578-residue protein sequence, read N- to C-terminus: Vi polysaccharide biosynthesis protein VipC/TviE (578 aa).

It functions in the pathway glycan metabolism; Vi-antigen biosynthesis. It participates in capsule biogenesis; capsule polysaccharide biosynthesis. The polypeptide is Vi polysaccharide biosynthesis protein VipC/TviE (vipC) (Salmonella typhi).